Reading from the N-terminus, the 641-residue chain is Chaperone protein DnaK (641 aa).

Position 201 is a phosphothreonine; by autocatalysis (T201). Residues A604–K622 are compositionally biased toward low complexity. The disordered stretch occupies residues A604–D625.

It belongs to the heat shock protein 70 family.

Its function is as follows. Acts as a chaperone. This is Chaperone protein DnaK from Stenotrophomonas maltophilia (strain R551-3).